We begin with the raw amino-acid sequence, 259 residues long: Synaptophysin-like protein 1 (259 aa).

Over 1 to 33 (MAPNIYLVRQRISRLGQRMSGFQINLNPLKEPL) the chain is Cytoplasmic. Residues 28–237 (PLKEPLGFIK…NAWFVYKETS (210 aa)) form the MARVEL domain. The chain crosses the membrane as a helical span at residues 34–54 (GFIKVLEWIASIFAFATCGGF). Residues 55-116 (KGQTEIQVNC…LIGDYSSSAQ (62 aa)) are Vesicular-facing. N-linked (GlcNAc...) asparagine glycosylation occurs at N71. A helical transmembrane segment spans residues 117-137 (FYVTFAVFVFLYCIAALLLYV). At 138-150 (GYTSLYLDSRKLP) the chain is on the cytoplasmic side. Residues 151-171 (MIDFVVTLVATFLWLVSTSAW) traverse the membrane as a helical segment. The Vesicular portion of the chain corresponds to 172–212 (AKALTDIKIATGHNIIDELPPCKKKAVLCYFGSVTSMGSLN). N212 is a glycosylation site (N-linked (GlcNAc...) asparagine). A helical membrane pass occupies residues 213 to 233 (VSVIFGFLNMILWGGNAWFVY). The Cytoplasmic portion of the chain corresponds to 234 to 259 (KETSLHSPSNTSAPHSQGGIPPPTGI).

Belongs to the synaptophysin/synaptobrevin family.

It is found in the cytoplasmic vesicle membrane. Its subcellular location is the melanosome. This chain is Synaptophysin-like protein 1 (SYPL1), found in Homo sapiens (Human).